The chain runs to 656 residues: Choline transporter-like protein 3 (656 aa).

The chain crosses the membrane as a helical span at residues 37-57 (WLVLFFLFWTGLVFIMGYSVV). Residues asparagine 141 and asparagine 154 are each glycosylated (N-linked (GlcNAc...) asparagine). The next 5 membrane-spanning stretches (helical) occupy residues 216 to 236 (DTILGLCVFTFALSLAMLFAF), 242 to 262 (LLIHIIISLVILGLLFVCGVL), 288 to 308 (LAFAIISTVVTVLLLALIFTL), 337 to 357 (LWTCAILIFFWVLWVAVLLSL), and 381 to 401 (YMWWYHLIGLIWTSEFILACQ). N-linked (GlcNAc...) asparagine glycans are attached at residues asparagine 506 and asparagine 524. The helical transmembrane segment at 537-557 (FVIFLGKVLVVCFSIFGGLMA) threads the bilayer. N-linked (GlcNAc...) asparagine glycosylation is present at asparagine 559. Residues 566-586 (VWAIPLLLVAFFACVVAHSFL) traverse the membrane as a helical segment. Positions 634-656 (AKSQGQKDALPNEEGTELQPIVR) are disordered.

Belongs to the CTL (choline transporter-like) family.

The protein resides in the membrane. The chain is Choline transporter-like protein 3 (Slc44a3) from Mus musculus (Mouse).